Reading from the N-terminus, the 206-residue chain is Small ribosomal subunit protein uS4 (206 aa).

The S4 RNA-binding domain maps to 96–156 (RRLDNVVYRM…DKSKNQSRIK (61 aa)).

It belongs to the universal ribosomal protein uS4 family. In terms of assembly, part of the 30S ribosomal subunit. Contacts protein S5. The interaction surface between S4 and S5 is involved in control of translational fidelity.

Its function is as follows. One of the primary rRNA binding proteins, it binds directly to 16S rRNA where it nucleates assembly of the body of the 30S subunit. Functionally, with S5 and S12 plays an important role in translational accuracy. This is Small ribosomal subunit protein uS4 from Buchnera aphidicola subsp. Schizaphis graminum (strain Sg).